A 214-amino-acid chain; its full sequence is MIKSTLIFRDDGLPLCSSVDDDTDPSLADQKKKVKVLISRFTPQSANEATLESGAYEMHYVRQQSVVYIVIVERGYPRNLAFAYLADVRHEFEHSYGNEYVKPSVRPYAFVSFDNFLQKTKKIYNDKRVQGNLDQLNSDLLGVKQIMTKNIEDLLYRGDSLDRMSDLSASLRQDSKKYRRSAQKINFDLLLSQYAPVALIGLFFLFLVWWLVFR.

Residues 1–192 (MIKSTLIFRD…QKINFDLLLS (192 aa)) lie on the Cytoplasmic side of the membrane. Positions 6 to 117 (LIFRDDGLPL…YAFVSFDNFL (112 aa)) constitute a Longin domain. The 61-residue stretch at 132–192 (NLDQLNSDLL…QKINFDLLLS (61 aa)) folds into the v-SNARE coiled-coil homology domain. A helical; Anchor for type IV membrane protein membrane pass occupies residues 193 to 213 (QYAPVALIGLFFLFLVWWLVF). Position 214 (Arg-214) is a topological domain, vesicular.

Belongs to the synaptobrevin family.

Its subcellular location is the membrane. The protein resides in the endoplasmic reticulum membrane. It is found in the golgi apparatus membrane. Required for transport from the ER to the Golgi complex. This Eremothecium gossypii (strain ATCC 10895 / CBS 109.51 / FGSC 9923 / NRRL Y-1056) (Yeast) protein is Protein transport protein SEC22 (SEC22).